The chain runs to 181 residues: MKIALFGGSFDPPHNGHNSVVLEALEKLDIDKLIIMPTYINPFKQSFSADEKQRFLWVKKLWGHLPKVEICDFETKQKRPVPSIESVKYLYKLYNPSKFYLLIGADHLEKLHLWHDFEKLNSLVEFVIANRNDIEIPKNFKDLKTDKKIASSFIRNTLNTNEVCEEIKDEVKKYYEKLQKN.

This sequence belongs to the NadD family.

The enzyme catalyses nicotinate beta-D-ribonucleotide + ATP + H(+) = deamido-NAD(+) + diphosphate. It participates in cofactor biosynthesis; NAD(+) biosynthesis; deamido-NAD(+) from nicotinate D-ribonucleotide: step 1/1. In terms of biological role, catalyzes the reversible adenylation of nicotinate mononucleotide (NaMN) to nicotinic acid adenine dinucleotide (NaAD). The sequence is that of Probable nicotinate-nucleotide adenylyltransferase from Campylobacter jejuni subsp. jejuni serotype O:6 (strain 81116 / NCTC 11828).